A 688-amino-acid polypeptide reads, in one-letter code: Soluble guanylate cyclase gcy-35 (688 aa).

Residue His105 coordinates heme. Residues 358 to 401 are a coiled coil; sequence LNQSRMSQVELNRTLEETTKKLKKMAQELEIEKQKTDELLCELM. The 129-residue stretch at 424–552 folds into the Guanylate cyclase domain; that stretch reads TLLFTDIVTF…DTVNVANKME (129 aa). Mg(2+) contacts are provided by Asp429 and Asp473. Residues 644-688 form a disordered region; the sequence is VENGNSAQNNHNNNNNTHHSGRKLMNGSSVDPGSHHIRSPTCTIS. Residues 646 to 659 show a composition bias toward low complexity; the sequence is NGNSAQNNHNNNNN.

This sequence belongs to the adenylyl cyclase class-4/guanylyl cyclase family. In terms of assembly, heterodimer; heterodimerizes with gcy-36, and possibly with other soluble guanylate cyclases. Heme serves as cofactor. In terms of tissue distribution, expressed in URX, AQR and PQR neurons. Also expressed in ALN, SDQ and BDU neurons, and variably in AVM, PLM and PLN neurons, pharyngeal and body wall muscles, and the excretory cell.

The protein localises to the cytoplasm. The protein resides in the cell projection. It localises to the dendrite. The catalysed reaction is GTP = 3',5'-cyclic GMP + diphosphate. Its activity is regulated as follows. Regulated by molecular oxygen, which binds to the heme binding site. Probably not activated by nitric oxide (NO). Plays a central role in social feeding behavior and oxygen sensation by synthesizing 3',5'-cyclic guanosine monophosphate (cGMP) from GTP. Oxygen, which binds to its heme-binding sites, probably regulates social behavior by modulating its activity. cGMP is a common second messenger in sensory transduction and is implicated in oxygen sensation. Indeed, C.elegans exhibits a strong behavioral preference for 5-12% oxygen, avoiding higher and lower oxygen levels; a higher level of oxygen inducing a naturally polymorphic social feeding behavior. Involved in avoidance of hyperoxia and for oxygen-induced aggregation and bordering, probably by mediating oxygen-sensing in URX, AQR and PQR sensory neurons. This is Soluble guanylate cyclase gcy-35 (gcy-35) from Caenorhabditis elegans.